Here is a 140-residue protein sequence, read N- to C-terminus: Large ribosomal subunit protein uL3 (140 aa).

Belongs to the universal ribosomal protein uL3 family. As to quaternary structure, part of the 50S ribosomal subunit. Forms a cluster with proteins L14 and L19.

One of the primary rRNA binding proteins, it binds directly near the 3'-end of the 23S rRNA, where it nucleates assembly of the 50S subunit. This is Large ribosomal subunit protein uL3 (rplC) from Planobispora rosea.